Reading from the N-terminus, the 357-residue chain is AA9 family lytic polysaccharide monooxygenase B (357 aa).

Residues 1 to 18 (MKFSSVLALAASAKLVAS) form the signal peptide. Residues histidine 19 and histidine 101 each contribute to the Cu(2+) site. Residues 19-234 (HATVFAVWIN…IPGPAVWDGA (216 aa)) form a catalytic region. A disulfide bridge links cysteine 61 with cysteine 182. O2 contacts are provided by histidine 168 and glutamine 177. Tyrosine 179 lines the Cu(2+) pocket. Residues 235 to 318 (SSGSGSSGSG…SAAPTGGTGT (84 aa)) are ser/Thr-rich linker. The interval 292-317 (SVRPTTSAAPTTSAPTSSAAPTGGTG) is disordered. Over residues 295 to 313 (PTTSAAPTTSAPTSSAAPT) the composition is skewed to low complexity. The region spanning 319–355 (GSIQIYQQCGGMNYKGATGCASGLTCKQWNPYYHQCV) is the CBM1 domain.

This sequence belongs to the polysaccharide monooxygenase AA9 family. Cu(2+) is required as a cofactor.

The protein localises to the secreted. The enzyme catalyses [(1-&gt;4)-beta-D-glucosyl]n+m + reduced acceptor + O2 = 4-dehydro-beta-D-glucosyl-[(1-&gt;4)-beta-D-glucosyl]n-1 + [(1-&gt;4)-beta-D-glucosyl]m + acceptor + H2O.. Functionally, lytic polysaccharide monooxygenase (LPMO) that depolymerizes crystalline and amorphous polysaccharides via the oxidation of scissile alpha- or beta-(1-4)-glycosidic bonds, yielding C4 oxidation products. Catalysis by LPMOs requires the reduction of the active-site copper from Cu(II) to Cu(I) by a reducing agent and H(2)O(2) or O(2) as a cosubstrate. Active on carboxymethylcellulose (CMC), hydroxyethylcellulose (HEC) and beta-glucan. Also active on soluble cellohexaose, a property that is restricted to only a few characterized LPMOs. The chain is AA9 family lytic polysaccharide monooxygenase B from Emericella nidulans (strain FGSC A4 / ATCC 38163 / CBS 112.46 / NRRL 194 / M139) (Aspergillus nidulans).